Reading from the N-terminus, the 311-residue chain is Putative dihydroorotate dehydrogenase A (fumarate) (311 aa).

Substrate is bound by residues K45, 69–73, and N128; that span reads NSMGL. 45–46 serves as a coordination point for FMN; that stretch reads KT. An FMN-binding site is contributed by N128. C131 functions as the Nucleophile in the catalytic mechanism. FMN-binding residues include K165 and V193. 194-195 contacts substrate; the sequence is NS. FMN-binding positions include G220, 248-249, and 270-271; these read GG and GT.

Belongs to the dihydroorotate dehydrogenase family. Type 1 subfamily. As to quaternary structure, homodimer. Requires FMN as cofactor.

The protein localises to the cytoplasm. The enzyme catalyses (S)-dihydroorotate + fumarate = orotate + succinate. It participates in pyrimidine metabolism; UMP biosynthesis via de novo pathway. In terms of biological role, catalyzes the conversion of dihydroorotate to orotate with fumarate as the electron acceptor. The sequence is that of Putative dihydroorotate dehydrogenase A (fumarate) (pyrD) from Streptococcus pyogenes serotype M5 (strain Manfredo).